We begin with the raw amino-acid sequence, 76 residues long: ATP synthase subunit c (76 aa).

The next 2 membrane-spanning stretches (helical) occupy residues 12–32 and 54–74; these read LGSIGYGLAAIGPGVGVGIIF and ILGFAFCEALALIGLVMPFVY.

This sequence belongs to the ATPase C chain family. In terms of assembly, F-type ATPases have 2 components, F(1) - the catalytic core - and F(0) - the membrane proton channel. F(1) has five subunits: alpha(3), beta(3), gamma(1), delta(1), epsilon(1). F(0) has three main subunits: a(1), b(2) and c(10-14). The alpha and beta chains form an alternating ring which encloses part of the gamma chain. F(1) is attached to F(0) by a central stalk formed by the gamma and epsilon chains, while a peripheral stalk is formed by the delta and b chains.

Its subcellular location is the cell membrane. F(1)F(0) ATP synthase produces ATP from ADP in the presence of a proton or sodium gradient. F-type ATPases consist of two structural domains, F(1) containing the extramembraneous catalytic core and F(0) containing the membrane proton channel, linked together by a central stalk and a peripheral stalk. During catalysis, ATP synthesis in the catalytic domain of F(1) is coupled via a rotary mechanism of the central stalk subunits to proton translocation. In terms of biological role, key component of the F(0) channel; it plays a direct role in translocation across the membrane. A homomeric c-ring of between 10-14 subunits forms the central stalk rotor element with the F(1) delta and epsilon subunits. The polypeptide is ATP synthase subunit c (Streptomyces coelicolor (strain ATCC BAA-471 / A3(2) / M145)).